The chain runs to 51 residues: Insulin (51 aa).

Intrachain disulfides connect Cys7–Cys37, Cys19–Cys50, and Cys36–Cys41.

The protein belongs to the insulin family. As to quaternary structure, heterodimer of a B chain and an A chain linked by two disulfide bonds.

It is found in the secreted. In terms of biological role, insulin decreases blood glucose concentration. It increases cell permeability to monosaccharides, amino acids and fatty acids. It accelerates glycolysis, the pentose phosphate cycle, and glycogen synthesis in liver. In Elephas maximus (Indian elephant), this protein is Insulin (INS).